A 722-amino-acid polypeptide reads, in one-letter code: Polyribonucleotide nucleotidyltransferase (722 aa).

Asp-495 and Asp-501 together coordinate Mg(2+). One can recognise a KH domain in the interval Pro-561–Ile-620. An S1 motif domain is found at Gly-630 to Lys-700.

Belongs to the polyribonucleotide nucleotidyltransferase family. The cofactor is Mg(2+).

The protein resides in the cytoplasm. The enzyme catalyses RNA(n+1) + phosphate = RNA(n) + a ribonucleoside 5'-diphosphate. Its function is as follows. Involved in mRNA degradation. Catalyzes the phosphorolysis of single-stranded polyribonucleotides processively in the 3'- to 5'-direction. This chain is Polyribonucleotide nucleotidyltransferase, found in Chromobacterium violaceum (strain ATCC 12472 / DSM 30191 / JCM 1249 / CCUG 213 / NBRC 12614 / NCIMB 9131 / NCTC 9757 / MK).